The primary structure comprises 464 residues: Na(+)/H(+) antiporter NhaA 1 (464 aa).

11 consecutive transmembrane segments (helical) span residues 41-61, 85-105, 121-141, 150-170, 180-200, 207-227, 234-254, 329-349, 363-383, 399-419, and 428-448; these read GGLILMMAALIALALANSPLA, LHHWVNDGLMALFFFVVGLEL, VLPIVAAIGGMVIPAICYMSL, GWGIPMATDIAFALGVIALLA, FLVALAIVDDLGAVVVIAVFY, SFLIAGALLTCLLIFFNMIGI, FFVGLILWFVFLKSGVHATLA, VAFFILPVFAIFNAGVTIDFG, VVFGLLFGKFVGITGASWLAI, IIGASMLGSIGFTMSIFIAEL, and IIQAKLGILLSSLVAGVAGYL.

It belongs to the NhaA Na(+)/H(+) (TC 2.A.33) antiporter family.

The protein resides in the cell inner membrane. The catalysed reaction is Na(+)(in) + 2 H(+)(out) = Na(+)(out) + 2 H(+)(in). Functionally, na(+)/H(+) antiporter that extrudes sodium in exchange for external protons. This chain is Na(+)/H(+) antiporter NhaA 1, found in Saccharophagus degradans (strain 2-40 / ATCC 43961 / DSM 17024).